The primary structure comprises 401 residues: Type I restriction enzyme EcoprrI specificity subunit (401 aa).

The protein belongs to the type-I restriction system S methylase family. The type I restriction/modification system is composed of three polypeptides R, M and S; the restriction enzyme has stoichiometry R(2)M(2)S(1) while the methyltransferase is M(2)S(1).

The specificity (S) subunit of a type I restriction enzyme; this subunit dictates DNA sequence specificity. The M and S subunits together form a methyltransferase (MTase) that methylates two adenine residues of the sequence 5'-CCAN(7)ATGC-3'. In the presence of the R subunit the complex can also act as an endonuclease, binding to the same target sequence but cutting the DNA some distance from this site. Whether the DNA is cut or modified depends on the methylation state of the target sequence. When the target site is unmodified, the DNA is cut. When the target site is hemimethylated, the complex acts as a maintenance MTase modifying the DNA so that both strands become methylated. After locating a non-methylated recognition site, the enzyme complex serves as a molecular motor that translocates DNA in an ATP-dependent manner until a collision occurs that triggers cleavage. This is Type I restriction enzyme EcoprrI specificity subunit (prrB) from Escherichia coli.